We begin with the raw amino-acid sequence, 25 residues long: Caerin-1.7 (25 aa).

Leucine 25 carries the post-translational modification Leucine amide.

It belongs to the frog skin active peptide (FSAP) family. Caerin subfamily. Post-translationally, caerin-1.7.1 does not have any antibacterial activity. As to expression, expressed by the skin dorsal glands.

It is found in the secreted. Functionally, antibacterial peptide, that adopts an alpha helical conformation which can disrupt bacterial membranes. Each caerin displays a different antimicrobial specificity. This Ranoidea xanthomera (Northern orange-eyed tree frog) protein is Caerin-1.7.